The sequence spans 452 residues: Pup--protein ligase (452 aa).

A Mg(2+)-binding site is contributed by Glu9. Arg53 is an ATP binding site. Tyr55 lines the Mg(2+) pocket. Asp57 (proton acceptor) is an active-site residue. Glu63 is a Mg(2+) binding site. Residues Thr66 and Trp419 each contribute to the ATP site.

This sequence belongs to the Pup ligase/Pup deamidase family. Pup-conjugating enzyme subfamily.

It catalyses the reaction ATP + [prokaryotic ubiquitin-like protein]-L-glutamate + [protein]-L-lysine = ADP + phosphate + N(6)-([prokaryotic ubiquitin-like protein]-gamma-L-glutamyl)-[protein]-L-lysine.. Its pathway is protein degradation; proteasomal Pup-dependent pathway. The protein operates within protein modification; protein pupylation. Its function is as follows. Catalyzes the covalent attachment of the prokaryotic ubiquitin-like protein modifier Pup to the proteasomal substrate proteins, thereby targeting them for proteasomal degradation. This tagging system is termed pupylation. The ligation reaction involves the side-chain carboxylate of the C-terminal glutamate of Pup and the side-chain amino group of a substrate lysine. The sequence is that of Pup--protein ligase from Geodermatophilus obscurus (strain ATCC 25078 / DSM 43160 / JCM 3152 / CCUG 61914 / KCC A-0152 / KCTC 9177 / NBRC 13315 / NRRL B-3577 / G-20).